The sequence spans 851 residues: Beta-galactosidase BoGH2A (851 aa).

The signal sequence occupies residues 1–19 (MMIGKLKYLMLGGCLILGS). C20 is lipidated: N-palmitoyl cysteine. The S-diacylglycerol cysteine moiety is linked to residue C20. The active-site Proton donor is the E437. The active-site Nucleophile is E544.

This sequence belongs to the glycosyl hydrolase 2 family.

The protein resides in the cell inner membrane. The catalysed reaction is Hydrolysis of terminal non-reducing beta-D-galactose residues in beta-D-galactosides.. The protein operates within glucan metabolism; xyloglucan degradation. Functionally, catalyzes the hydrolysis of terminal non-reducing beta-D-galactose residues in beta-D-galactosides in xyloglucan degradation, converting 'L' units to 'X' units. The sequence is that of Beta-galactosidase BoGH2A from Bacteroides ovatus (strain ATCC 8483 / DSM 1896 / JCM 5824 / BCRC 10623 / CCUG 4943 / NCTC 11153).